Consider the following 167-residue polypeptide: Cell number regulator 3 (167 aa).

Residues 67-84 traverse the membrane as a helical segment; sequence GMTSCGTSAALFALIQWL.

This sequence belongs to the cornifelin family. Expressed only in pollen.

It is found in the membrane. This Zea mays (Maize) protein is Cell number regulator 3 (CNR3).